We begin with the raw amino-acid sequence, 248 residues long: Histone H1, gonadal (248 aa).

Disordered regions lie at residues 1–46 (PGSP…PPVL) and 115–248 (AVAK…KARK). Positions 9–39 (ASPRKSPRKSPKKSPRKASASPRRKAKRARA) are enriched in basic residues. An H15 domain is found at 41-115 (THPPVLEMVQ…GASGRFRVGA (75 aa)). Positions 118 to 248 (KPKKAKKTSA…KRRSPKKARK (131 aa)) are enriched in basic residues.

The protein belongs to the histone H1/H5 family. In terms of tissue distribution, sperm.

Its subcellular location is the nucleus. It is found in the chromosome. Histones H1 are necessary for the condensation of nucleosome chains into higher-order structures. The polypeptide is Histone H1, gonadal (Parechinus angulosus (Angulate sea urchin)).